Here is a 363-residue protein sequence, read N- to C-terminus: DNA replication and repair protein RecF (363 aa).

30-37 contacts ATP; sequence GNNAQGKT.

This sequence belongs to the RecF family.

Its subcellular location is the cytoplasm. Functionally, the RecF protein is involved in DNA metabolism; it is required for DNA replication and normal SOS inducibility. RecF binds preferentially to single-stranded, linear DNA. It also seems to bind ATP. This is DNA replication and repair protein RecF from Clostridium acetobutylicum (strain ATCC 824 / DSM 792 / JCM 1419 / IAM 19013 / LMG 5710 / NBRC 13948 / NRRL B-527 / VKM B-1787 / 2291 / W).